Consider the following 342-residue polypeptide: Sesquiterpene synthase MBR_09977 (342 aa).

The Mg(2+) site is built by Asp-91 and Asp-96. The DDXXXD motif signature appears at 91–96; that stretch reads DDLFVD. Arg-184 lines the substrate pocket. Asn-230, Ser-234, and Glu-238 together coordinate Mg(2+).

Belongs to the terpene synthase family. The cofactor is Mg(2+).

It carries out the reaction (2E,6E)-farnesyl diphosphate + H2O = (+)-corvol ether B + diphosphate. The enzyme catalyses (2E,6E)-farnesyl diphosphate + H2O = (+)-corvol ether A + diphosphate. In terms of biological role, terpene synthase that catalyzes the conversion of (2E,6E)-farnesyl diphosphate (FPP) into sesquiterpenes which are important for fungi-environment interactions. Produces a mixture consisting of 8 sesquiterpenes including corvol ethers A and B, as well as traces of epizonarene, gamma-cadinene, delta-cadinene, alpha-cadinene, alpha-cadinol, and an unidentified sesquiterpene. The major product is corvol ether A. This is Sesquiterpene synthase MBR_09977 from Metarhizium brunneum (strain ARSEF 3297).